The sequence spans 290 residues: Probable aquaporin PIP2-7 (290 aa).

A run of 2 helical transmembrane segments spans residues 45–65 and 79–99; these read ALIA…ATVI and GVGY…LVYC. The NPA 1 motif lies at 109-111; sequence NPA. 3 consecutive transmembrane segments (helical) span residues 128-148, 168-188, and 202-222; these read VLYV…VKGI, SAAG…YTVF, and IPVL…LATI. The NPA 2 signature appears at 230 to 232; that stretch reads NPA. Residues 252-272 form a helical membrane-spanning segment; the sequence is IFWVGPVIGAFLAAAYHKLVL.

Belongs to the MIP/aquaporin (TC 1.A.8) family. PIP (TC 1.A.8.11) subfamily. In terms of tissue distribution, expressed in roots.

It localises to the cell membrane. Aquaporins facilitate the transport of water and small neutral solutes across cell membranes. This Oryza sativa subsp. japonica (Rice) protein is Probable aquaporin PIP2-7 (PIP2-7).